We begin with the raw amino-acid sequence, 227 residues long: PKHD-type hydroxylase BURPS668_A1690 (227 aa).

A Fe2OG dioxygenase domain is found at 78–178; that stretch reads KVFPPLFNRY…RVASFFWIQS (101 aa). The Fe cation site is built by His-96, Asp-98, and His-159. Arg-169 provides a ligand contact to 2-oxoglutarate.

It depends on Fe(2+) as a cofactor. L-ascorbate is required as a cofactor.

This is PKHD-type hydroxylase BURPS668_A1690 from Burkholderia pseudomallei (strain 668).